The primary structure comprises 643 residues: Transcription elongation factor B polypeptide 3 (643 aa).

The 74-residue stretch at 9 to 82 folds into the TFIIS N-terminal domain; sequence DVVRHYQRSI…TKWKAMVAKE (74 aa). Disordered regions lie at residues 86-289 and 302-351; these read IAST…MGAN and SSKK…SKKP. Over residues 94–106 the composition is skewed to basic and acidic residues; that stretch reads HNEEDSGKTKSSD. The segment covering 114 to 124 has biased composition (polar residues); the sequence is KGGNSSSGEDL. Position 120 is a phosphoserine (Ser-120). The span at 127–136 shows a compositional bias: basic residues; it reads SKHKSKHAKS. Composition is skewed to basic and acidic residues over residues 164-198 and 207-237; these read HDKSKDRDKDREGQKEAKEHKEKKSNGEHKSKDSS and SKSESHKSEHTKSKHEKDKTSHSELKEVKDK. Residues 238 to 255 show a composition bias toward basic residues; the sequence is SSKHKSSSSKSSKRSHSP. The segment covering 302 to 336 has biased composition (low complexity); it reads SSKKSSSNSKSKFVAKPTAAPSSSALSAPTTAGSS. The interval 413–571 is activation domain; it reads AQGISSKTMR…PPRSVQRKQE (159 aa). Residues 439–448 are interacting with Elongin BC complex; the sequence is SLFDLCTRVL.

The protein localises to the nucleus. Its function is as follows. SIII, also known as elongin, is a general transcription elongation factor that increases the RNA polymerase II transcription elongation past template-encoded arresting sites. Subunit A is transcriptionally active and its transcription activity is strongly enhanced by binding to the dimeric complex of the SIII regulatory subunits B and C (elongin BC complex). May play an important role in metamorphosis. This chain is Transcription elongation factor B polypeptide 3 (EloA), found in Drosophila melanogaster (Fruit fly).